The following is a 318-amino-acid chain: Homoserine kinase (318 aa).

ATP is bound at residue 97–107 (PIGSGLGSSAC).

The protein belongs to the GHMP kinase family. Homoserine kinase subfamily.

Its subcellular location is the cytoplasm. It catalyses the reaction L-homoserine + ATP = O-phospho-L-homoserine + ADP + H(+). The protein operates within amino-acid biosynthesis; L-threonine biosynthesis; L-threonine from L-aspartate: step 4/5. Its function is as follows. Catalyzes the ATP-dependent phosphorylation of L-homoserine to L-homoserine phosphate. In Photobacterium profundum (strain SS9), this protein is Homoserine kinase.